A 688-amino-acid chain; its full sequence is Methionine--tRNA ligase (688 aa).

Residues 15 to 25 carry the 'HIGH' region motif; that stretch reads PYANGPIHLGH. The Zn(2+) site is built by Cys-146, Cys-149, Cys-159, and Cys-162. A 'KMSKS' region motif is present at residues 332–336; that stretch reads KMSKS. ATP is bound at residue Lys-335. The tract at residues 552 to 576 is disordered; sequence AEAPKKADSKKATDTPVDTRPPLES. Positions 554–564 are enriched in basic and acidic residues; that stretch reads APKKADSKKAT. A tRNA-binding domain is found at 587-688; that stretch reads DFAKIDLRIA…EGAQPGMRVK (102 aa).

This sequence belongs to the class-I aminoacyl-tRNA synthetase family. MetG type 1 subfamily. Homodimer. The cofactor is Zn(2+).

The protein resides in the cytoplasm. The catalysed reaction is tRNA(Met) + L-methionine + ATP = L-methionyl-tRNA(Met) + AMP + diphosphate. In terms of biological role, is required not only for elongation of protein synthesis but also for the initiation of all mRNA translation through initiator tRNA(fMet) aminoacylation. This Shewanella woodyi (strain ATCC 51908 / MS32) protein is Methionine--tRNA ligase.